The sequence spans 196 residues: Protein GrpE (196 aa).

Residues 1–40 (MSSKEQKTPEGQAPEEIIMDQHEEVEAVEPNDSAEQVDPR) are disordered.

It belongs to the GrpE family. Homodimer.

Its subcellular location is the cytoplasm. In terms of biological role, participates actively in the response to hyperosmotic and heat shock by preventing the aggregation of stress-denatured proteins, in association with DnaK and GrpE. It is the nucleotide exchange factor for DnaK and may function as a thermosensor. Unfolded proteins bind initially to DnaJ; upon interaction with the DnaJ-bound protein, DnaK hydrolyzes its bound ATP, resulting in the formation of a stable complex. GrpE releases ADP from DnaK; ATP binding to DnaK triggers the release of the substrate protein, thus completing the reaction cycle. Several rounds of ATP-dependent interactions between DnaJ, DnaK and GrpE are required for fully efficient folding. This Salmonella gallinarum (strain 287/91 / NCTC 13346) protein is Protein GrpE.